We begin with the raw amino-acid sequence, 568 residues long: MGGCCSCLKESQDDATVLPIAENEREAVTSLLGYLEDKDNYDFYSGGPLKALTTLVYSDNLNLQRSAALAFAEITEKYVRPVDREVLEPILILLQSHDPQIQIAACAALGNLAVNNENKILIVEMGGLEPLIEQMKSNNVEVQCNAVGCITNLATQDDNKAKIAHSGALVPLTKLAKSKNIRVQRNATGALLNMTHSGENRKELVDAGAVPVLVSLLSSSDADVQYYCTTALSNIAVDESNRRKLSQTEPRLVSKLVVLTDSPSARVKCQATLALRNLASDTGYQLEIVRAGGLSHLVKLIQCNSMPLVLASVACIRNISIHPLNEGLIVDAGFLKPLVKLLDYNDNEEIQCHAVSTLRNLAASSEKNRQEFFESGAVEKCKQLALVSPISVQSEISACFAILALADNSKLELLDANILEALIPMTFSTNQEVAGNAAAALANLCSRINNYEKIIESWTEPSKGVCGFLIRFLQSEYPTFEHIALWTILQLLESHNETMLGLIKSNKEIVKSIKRLSDINYENAQKASSLHSRLQQVNGGSVASGSEQYEHASLELYNITQQIMQFLN.

A lipid anchor (N-myristoyl glycine) is attached at Gly2. 3 S-palmitoyl cysteine lipidation sites follow: Cys4, Cys5, and Cys7. ARM repeat units lie at residues 37 to 74, 75 to 114, 116 to 155, 157 to 196, 198 to 237, 241 to 280, 282 to 321, 323 to 363, and 407 to 446; these read DKDN…FAEI, TEKY…NLAV, NENK…NLAT, DDNK…NMTH, GENR…NIAV, NRRK…NLAS, TGYQ…NISI, PLNE…NLAA, and DNSK…NLCS.

The protein belongs to the beta-catenin family.

Its subcellular location is the vacuole membrane. Its function is as follows. Functions in both vacuole inheritance and protein targeting from the cytoplasm to vacuole. This Eremothecium gossypii (strain ATCC 10895 / CBS 109.51 / FGSC 9923 / NRRL Y-1056) (Yeast) protein is Vacuolar protein 8 (VAC8).